Reading from the N-terminus, the 324-residue chain is GDP-mannose transporter (324 aa).

Residues 1-13 lie on the Cytoplasmic side of the membrane; it reads MSELKSRIGNSGS. Residues 14–34 form a helical membrane-spanning segment; sequence IANSGPVSILCYCASSILMTV. Residues 35-44 are Lumenal-facing; that stretch reads TNKFVVNTDG. Residues 45-65 traverse the membrane as a helical segment; the sequence is FNMFFVMLFAQSLVCTMCLMV. Over 66 to 76 the chain is Cytoplasmic; it reads LKMFGYAKYRP. A helical membrane pass occupies residues 77–97; the sequence is LNLIDVKNWLPISFLLVFMIF. The Lumenal segment spans residues 98–116; it reads TSAKALKYMPVPIYTIFKN. N-linked (GlcNAc...) asparagine glycosylation is present at Asn-116. Residues 117–137 traverse the membrane as a helical segment; the sequence is LTIILIAYGEVLFFGGSVTPM. Position 138 (Glu-138) is a topological domain, cytoplasmic. Residues 139–159 form a helical membrane-spanning segment; the sequence is LSSFILMVLSSVVASLGDQQA. Residues 160 to 170 lie on the Lumenal side of the membrane; the sequence is AKIAQPLANNS. A glycan (N-linked (GlcNAc...) asparagine) is linked at Asn-168. The helical transmembrane segment at 171-191 threads the bilayer; that stretch reads ILSPEYYWMFLNCICSASFVL. Residues 192–204 lie on the Cytoplasmic side of the membrane; that stretch reads IMRKRIKLTNFKD. A helical transmembrane segment spans residues 205-225; it reads YDTMFYNNALALPILLGFSFL. Residues 226 to 243 lie on the Lumenal side of the membrane; the sequence is SEDWSSENLAQNFSGESL. An N-linked (GlcNAc...) asparagine glycan is attached at Asn-237. The chain crosses the membrane as a helical span at residues 244–264; it reads SAMIISGMTSVGISYCSGWCV. Residues 265–270 are Cytoplasmic-facing; it reads RATSST. A helical membrane pass occupies residues 271–291; it reads TYSMVGALNKLPIALAGLIFF. The Lumenal segment spans residues 292-295; it reads DAPR. A helical membrane pass occupies residues 296–316; it reads NFLSIMSIFIGFASGLSYAVA. The Cytoplasmic portion of the chain corresponds to 317–324; that stretch reads KQKKVQKN.

It belongs to the TPT transporter family. SLC35D subfamily. In terms of assembly, homooligomer.

It is found in the golgi apparatus membrane. It localises to the cytoplasmic vesicle membrane. The protein resides in the endoplasmic reticulum membrane. In terms of biological role, involved in the import of GDP-mannose from the cytoplasm into the Golgi lumen. In Candida glabrata (strain ATCC 2001 / BCRC 20586 / JCM 3761 / NBRC 0622 / NRRL Y-65 / CBS 138) (Yeast), this protein is GDP-mannose transporter (VRG4).